The sequence spans 225 residues: MKIVVPIMPTSLEEAQALELSRFEGADIIEWRADFLDKHSILTVAPAIFEKFAGFEIVFTIRTTREGGKIELTDGEYVTLIKDVAAIYSPDYIDFEYFTRKEVFDQMLGFSNLVLSYHNFEETPENLMELLSEMTNLTPRVVKVAVMPKNEQDVLDLMNFTRGFKAFNPEQEFVTMSMGKLGRLSRLAGDLVGSSWTFASLDNTSAPGQVALADMCRIREVLDAD.

3-dehydroquinate-binding positions include 30–32 (EWR) and Arg-62. His-118 (proton donor/acceptor) is an active-site residue. Residue Lys-143 is the Schiff-base intermediate with substrate of the active site. Residues Arg-186, Ser-205, and Gln-209 each contribute to the 3-dehydroquinate site.

Belongs to the type-I 3-dehydroquinase family. In terms of assembly, homodimer.

The catalysed reaction is 3-dehydroquinate = 3-dehydroshikimate + H2O. It participates in metabolic intermediate biosynthesis; chorismate biosynthesis; chorismate from D-erythrose 4-phosphate and phosphoenolpyruvate: step 3/7. Functionally, involved in the third step of the chorismate pathway, which leads to the biosynthesis of aromatic amino acids. Catalyzes the cis-dehydration of 3-dehydroquinate (DHQ) and introduces the first double bond of the aromatic ring to yield 3-dehydroshikimate. The protein is 3-dehydroquinate dehydratase of Streptococcus thermophilus (strain ATCC BAA-250 / LMG 18311).